The primary structure comprises 71 residues: Small ribosomal subunit protein bS18 (71 aa).

The protein belongs to the bacterial ribosomal protein bS18 family. In terms of assembly, part of the 30S ribosomal subunit. Forms a tight heterodimer with protein bS6.

In terms of biological role, binds as a heterodimer with protein bS6 to the central domain of the 16S rRNA, where it helps stabilize the platform of the 30S subunit. This Nostoc punctiforme (strain ATCC 29133 / PCC 73102) protein is Small ribosomal subunit protein bS18.